The primary structure comprises 148 residues: Thiol-disulfide oxidoreductase YkuV (148 aa).

In terms of domain architecture, Thioredoxin spans 2 to 145 (KLRQPMPELT…LEKRVNRVLA (144 aa)). Residues Cys41 and Cys44 are joined by a disulfide bond.

In terms of assembly, monomer.

The protein localises to the cytoplasm. Participates in various redox reactions through the reversible oxidation of its active center dithiol to a disulfide and catalyzes dithiol-disulfide exchange reactions. This Bacillus subtilis (strain 168) protein is Thiol-disulfide oxidoreductase YkuV (ykuV).